The primary structure comprises 326 residues: DNA-directed RNA polymerase subunit alpha (326 aa).

The tract at residues 1 to 232 (MQGSARNFLK…EQLSSFVELE (232 aa)) is alpha N-terminal domain (alpha-NTD). The interval 246-326 (FDPQLLAAVD…NWPPVDLMSE (81 aa)) is alpha C-terminal domain (alpha-CTD).

This sequence belongs to the RNA polymerase alpha chain family. In terms of assembly, homodimer. The RNAP catalytic core consists of 2 alpha, 1 beta, 1 beta' and 1 omega subunit. When a sigma factor is associated with the core the holoenzyme is formed, which can initiate transcription.

It catalyses the reaction RNA(n) + a ribonucleoside 5'-triphosphate = RNA(n+1) + diphosphate. Its function is as follows. DNA-dependent RNA polymerase catalyzes the transcription of DNA into RNA using the four ribonucleoside triphosphates as substrates. This chain is DNA-directed RNA polymerase subunit alpha, found in Ruthia magnifica subsp. Calyptogena magnifica.